The primary structure comprises 1174 residues: Protein kinase C-like (1174 aa).

The REM-1 1 domain maps to 1–68 (MANVEETVAN…LRDLDLQRTT (68 aa)). Residues 69–84 (SGVDNMSLQPGRSPTN) show a composition bias toward polar residues. A disordered region spans residues 69–140 (SGVDNMSLQP…PPPATANKRP (72 aa)). Residues 96–123 (GYAQQDQGGYGGPQSQYSQLSGGEALQP) are compositionally biased toward low complexity. Residues 124 to 134 (PRAPFAAPPPA) are compositionally biased toward pro residues. An REM-1 2 domain is found at 149–226 (KYDTPHLGPR…LKRYEDLHVD (78 aa)). Positions 229–349 (GDGDDNDSLD…MRRKKLETEL (121 aa)) constitute a C2 domain. The interval 358 to 406 (DKMGGHTGIQPDMQFQPPPGQSPAGGPGGGPTPAGVRPPGAPQPQTGPI) is disordered. Residues 380-389 (PAGGPGGGPT) are compositionally biased toward gly residues. 2 consecutive Phorbol-ester/DAG-type zinc fingers follow at residues 458–506 (GHKF…VTKC) and 526–576 (PHRF…PDFC). The interval 593–842 (TRRGQSSSGP…PAANTQGTGK (250 aa)) is disordered. A compositionally biased stretch (polar residues) spans 596-611 (GQSSSGPGMSQRTLRP). The span at 624 to 636 (QSPGQPGQESPTQ) shows a compositional bias: low complexity. The segment covering 648–657 (SPPPGPPRQP) has biased composition (pro residues). Residues 658–709 (SYPSSATSVDAARASYSTTGTASTGAPTSPTSGSRPPSGPRTQSSVAAAAAA) are compositionally biased toward low complexity. The span at 720–744 (RSNTDYSPQSGRSSGSGYPTEQRMS) shows a compositional bias: polar residues. The span at 786–802 (LPQPPPPQSPPQHPQQP) shows a compositional bias: pro residues. Residues 808 to 820 (KMPEQQALTQQPP) show a composition bias toward polar residues. The 260-residue stretch at 849–1108 (FNFLAVLGKG…AQEIMSHAFF (260 aa)) folds into the Protein kinase domain. ATP is bound by residues 855–863 (LGKGNFGKV) and Lys878. Asp974 functions as the Proton acceptor in the catalytic mechanism. Residues 1109–1174 (RNINWDDIYH…RGFSYSADFA (66 aa)) enclose the AGC-kinase C-terminal domain.

Belongs to the protein kinase superfamily. AGC Ser/Thr protein kinase family. PKC subfamily.

It carries out the reaction L-seryl-[protein] + ATP = O-phospho-L-seryl-[protein] + ADP + H(+). It catalyses the reaction L-threonyl-[protein] + ATP = O-phospho-L-threonyl-[protein] + ADP + H(+). The chain is Protein kinase C-like (PKC1) from Cochliobolus heterostrophus (Southern corn leaf blight fungus).